A 380-amino-acid chain; its full sequence is Queuine tRNA-ribosyltransferase (380 aa).

Asp96 (proton acceptor) is an active-site residue. Residues 96–100, Asp150, Gln193, and Gly220 contribute to the substrate site; that span reads DSGGF. Residues 251–257 form an RNA binding region; it reads GVGAPDS. Catalysis depends on Asp270, which acts as the Nucleophile. Residues 275-279 form an RNA binding; important for wobble base 34 recognition region; that stretch reads TRIAR. Zn(2+) contacts are provided by Cys308, Cys310, Cys313, and His339.

This sequence belongs to the queuine tRNA-ribosyltransferase family. Homodimer. Within each dimer, one monomer is responsible for RNA recognition and catalysis, while the other monomer binds to the replacement base PreQ1. It depends on Zn(2+) as a cofactor.

The catalysed reaction is 7-aminomethyl-7-carbaguanine + guanosine(34) in tRNA = 7-aminomethyl-7-carbaguanosine(34) in tRNA + guanine. The protein operates within tRNA modification; tRNA-queuosine biosynthesis. Catalyzes the base-exchange of a guanine (G) residue with the queuine precursor 7-aminomethyl-7-deazaguanine (PreQ1) at position 34 (anticodon wobble position) in tRNAs with GU(N) anticodons (tRNA-Asp, -Asn, -His and -Tyr). Catalysis occurs through a double-displacement mechanism. The nucleophile active site attacks the C1' of nucleotide 34 to detach the guanine base from the RNA, forming a covalent enzyme-RNA intermediate. The proton acceptor active site deprotonates the incoming PreQ1, allowing a nucleophilic attack on the C1' of the ribose to form the product. After dissociation, two additional enzymatic reactions on the tRNA convert PreQ1 to queuine (Q), resulting in the hypermodified nucleoside queuosine (7-(((4,5-cis-dihydroxy-2-cyclopenten-1-yl)amino)methyl)-7-deazaguanosine). The sequence is that of Queuine tRNA-ribosyltransferase from Streptococcus pyogenes serotype M6 (strain ATCC BAA-946 / MGAS10394).